The primary structure comprises 512 residues: MVGMYIIIPIVTFIIGGLLAWLGMRFLLKSKYDSVLQEAEKEAEVIKKNKMLEVKEKFLHLKADLEKQVSQRNAKIQSVETKLKQRELTMNQRQEELQRRNNEVEAVKENLSSQLELVEKKKQDLDKLHQKEVEHLEAISGLSAEEAKERLIESLKDEAKTQAASYINEIVEEAKMTANKEAKKIVIQSIQRVATETAIENSITVFHIESDEIKGRIIGREGRNIRALEAATGIEIVVDDTPEAIVLSGFDPVRREIARLALHQLVQDGRIHPARIEEVVTKVKKQVEDEVVETGKRTVIDLGVHGLHPELIRMIGKMKYRSSYGQNLLQHARETANLCAVMASELGLNPKKAKRAGLLHDIGKVPDDEPELPHAILGMKLCEKYKEKPDICNAVGAHHDEVEMQTLLAPIVQVCDAISGARPGARREIVEAYIKRLNDLEQLALSYPGVVKTYAIQAGRELRVIVGADKIDDKDTENLSAEIAKKIQDEMTYPGQVKITVIRETRAVSYAK.

A helical transmembrane segment spans residues 2–22 (VGMYIIIPIVTFIIGGLLAWL). The KH domain maps to 202 to 262 (SITVFHIESD…VRREIARLAL (61 aa)). In terms of domain architecture, HD spans 328-421 (LLQHARETAN…VQVCDAISGA (94 aa)).

The protein belongs to the RNase Y family.

It localises to the cell membrane. Endoribonuclease that initiates mRNA decay. This chain is Ribonuclease Y, found in Parabacteroides distasonis (strain ATCC 8503 / DSM 20701 / CIP 104284 / JCM 5825 / NCTC 11152).